The following is a 243-amino-acid chain: MHNIQLVQEIERHETPLNIRPTSPYTLNPPVERDGFSWPSVGTRQRAEETEEEEKERIQRISGAIKTILTELGEDVNREGLLDTPQRYAKAMLYFTKGYQTNIMDDVIKNAVFEEDHDEMVIVRDIEIYSLCEHHLVPFFGKVHIGYIPNKKVIGLSKLARLAEMYARRLQVQERLTKQIAMALSDILKPLGVAVVMEASHMCMVSRGIQKTGSSTVTSCMLGGFRAHKTREEFLTLLGRRSI.

Threonine 15 carries the phosphothreonine modification. The interval 18–55 (NIRPTSPYTLNPPVERDGFSWPSVGTRQRAEETEEEEK) is disordered. Phosphoserine is present on serine 23. Zn(2+) is bound by residues cysteine 132, histidine 135, and cysteine 203.

This sequence belongs to the GTP cyclohydrolase I family. In terms of assembly, homodimer.

It carries out the reaction GTP + H2O = 7,8-dihydroneopterin 3'-triphosphate + formate + H(+). It functions in the pathway cofactor biosynthesis; 7,8-dihydroneopterin triphosphate biosynthesis; 7,8-dihydroneopterin triphosphate from GTP: step 1/1. Functionally, GTP cyclohydrolase 1 is the first enzyme in the biosynthetic pathway leading to folic acid. The sequence is that of GTP cyclohydrolase 1 from Saccharomyces cerevisiae (strain ATCC 204508 / S288c) (Baker's yeast).